The chain runs to 416 residues: ABSCISIC ACID-INSENSITIVE 5-like protein 5 (416 aa).

Residues 1 to 23 (MDGSMNLGNEPPGDGGGGGGLTR) form a disordered region. Over residues 13 to 22 (GDGGGGGGLT) the composition is skewed to gly residues. 3 positions are modified to phosphoserine: serine 26, serine 45, and serine 86. Position 135 is a phosphothreonine (threonine 135). The tract at residues 300–326 (SEGIGKSNGDSSSLSPSPYMFNGGVRG) is disordered. The bZIP domain occupies 336 to 399 (VERRQRRMIK…KNQETEMRNL (64 aa)). Residues 338 to 357 (RRQRRMIKNRESAARSRARK) form a basic motif region. The interval 364–385 (LEAEVAKLKEENDELQRKQARI) is leucine-zipper. The interval 388–416 (MQKNQETEMRNLLQGGPKKKLRRTESGPW) is disordered.

It belongs to the bZIP family. ABI5 subfamily. As to quaternary structure, DNA-binding heterodimer. Interacts with ARIA. In terms of processing, the activation by phosphorylation is induced by abscisic acid (ABA). Phosphorylated by SRK2C, SRK2D, SRK2E, SRK2F and SRK2I in vitro. As to expression, expressed in roots, leaves, flowers and siliques but not in seeds.

The protein localises to the nucleus. In terms of biological role, involved in ABA and stress responses and acts as a positive component of glucose signal transduction. Functions as a transcriptional activator in the ABA-inducible expression of rd29B. Binds specifically to the ABA-responsive element (ABRE) of the rd29B gene promoter. The chain is ABSCISIC ACID-INSENSITIVE 5-like protein 5 (ABF2) from Arabidopsis thaliana (Mouse-ear cress).